The chain runs to 379 residues: uncharacterized protein (379 aa).

This is an uncharacterized protein from Acanthamoeba polyphaga (Amoeba).